Reading from the N-terminus, the 197-residue chain is Phosphoheptose isomerase (197 aa).

Positions Val-41–Glu-197 constitute an SIS domain. Asn-56–Gly-58 lines the substrate pocket. Zn(2+) is bound by residues His-65 and Glu-69. Residues Glu-69, Asn-98–Asp-99, Ser-124–Ser-126, Ser-129, and Gln-176 contribute to the substrate site. Zn(2+)-binding residues include Gln-176 and His-184.

Belongs to the SIS family. GmhA subfamily. Zn(2+) is required as a cofactor.

It localises to the cytoplasm. The catalysed reaction is 2 D-sedoheptulose 7-phosphate = D-glycero-alpha-D-manno-heptose 7-phosphate + D-glycero-beta-D-manno-heptose 7-phosphate. It functions in the pathway carbohydrate biosynthesis; D-glycero-D-manno-heptose 7-phosphate biosynthesis; D-glycero-alpha-D-manno-heptose 7-phosphate and D-glycero-beta-D-manno-heptose 7-phosphate from sedoheptulose 7-phosphate: step 1/1. Catalyzes the isomerization of sedoheptulose 7-phosphate in D-glycero-D-manno-heptose 7-phosphate. In Roseiflexus sp. (strain RS-1), this protein is Phosphoheptose isomerase.